The chain runs to 489 residues: Glutamyl-tRNA(Gln) amidotransferase subunit A (489 aa).

Active-site charge relay system residues include K78 and S153. S177 (acyl-ester intermediate) is an active-site residue.

The protein belongs to the amidase family. GatA subfamily. Heterotrimer of A, B and C subunits.

It carries out the reaction L-glutamyl-tRNA(Gln) + L-glutamine + ATP + H2O = L-glutaminyl-tRNA(Gln) + L-glutamate + ADP + phosphate + H(+). In terms of biological role, allows the formation of correctly charged Gln-tRNA(Gln) through the transamidation of misacylated Glu-tRNA(Gln) in organisms which lack glutaminyl-tRNA synthetase. The reaction takes place in the presence of glutamine and ATP through an activated gamma-phospho-Glu-tRNA(Gln). This Enterococcus faecalis (strain ATCC 700802 / V583) protein is Glutamyl-tRNA(Gln) amidotransferase subunit A.